The chain runs to 201 residues: Recombination protein RecR (201 aa).

The segment at Cys-57–Cys-72 adopts a C4-type zinc-finger fold. One can recognise a Toprim domain in the interval Gly-81–Pro-176.

This sequence belongs to the RecR family.

In terms of biological role, may play a role in DNA repair. It seems to be involved in an RecBC-independent recombinational process of DNA repair. It may act with RecF and RecO. The polypeptide is Recombination protein RecR (Photorhabdus laumondii subsp. laumondii (strain DSM 15139 / CIP 105565 / TT01) (Photorhabdus luminescens subsp. laumondii)).